The chain runs to 387 residues: Sorting nexin-7 (387 aa).

Positions 30–151 (KDLFITVDAP…VFLTAQAEEL (122 aa)) constitute a PX domain. 4 residues coordinate a 1,2-diacyl-sn-glycero-3-phospho-(1D-myo-inositol-3-phosphate): R73, Q75, K103, and R117. Residues 178–387 (GVKNRPEEFM…PSEEDSEEKL (210 aa)) enclose the BAR domain.

The protein belongs to the sorting nexin family. As to quaternary structure, heterodimer; heterodimerizes with SNX4.

Its subcellular location is the early endosome membrane. Functionally, involved in the regulation of endocytosis and in several stages of intracellular trafficking. Together with SNX4, involved in autophagosome assembly by regulating trafficking and recycling of phospholipid scramblase ATG9A. This Mus musculus (Mouse) protein is Sorting nexin-7.